The sequence spans 461 residues: Phosphoglucosamine mutase (461 aa).

Serine 118 acts as the Phosphoserine intermediate in catalysis. Mg(2+) is bound by residues serine 118, aspartate 255, aspartate 257, and aspartate 259. Serine 118 is subject to Phosphoserine.

This sequence belongs to the phosphohexose mutase family. Requires Mg(2+) as cofactor. Activated by phosphorylation.

It carries out the reaction alpha-D-glucosamine 1-phosphate = D-glucosamine 6-phosphate. Functionally, catalyzes the conversion of glucosamine-6-phosphate to glucosamine-1-phosphate. The sequence is that of Phosphoglucosamine mutase from Acidothermus cellulolyticus (strain ATCC 43068 / DSM 8971 / 11B).